A 364-amino-acid polypeptide reads, in one-letter code: Coproporphyrin III ferrochelatase (364 aa).

Positions 29 and 118 each coordinate Fe-coproporphyrin III. Fe(2+) is bound by residues His-169 and Glu-250.

The protein belongs to the ferrochelatase family.

It is found in the cytoplasm. It carries out the reaction Fe-coproporphyrin III + 2 H(+) = coproporphyrin III + Fe(2+). It functions in the pathway porphyrin-containing compound metabolism; protoheme biosynthesis. In terms of biological role, involved in coproporphyrin-dependent heme b biosynthesis. Catalyzes the insertion of ferrous iron into coproporphyrin III to form Fe-coproporphyrin III. The chain is Coproporphyrin III ferrochelatase from Streptococcus pneumoniae serotype 4 (strain ATCC BAA-334 / TIGR4).